Consider the following 155-residue polypeptide: Regulatory protein RecX (155 aa).

Belongs to the RecX family.

The protein resides in the cytoplasm. Its function is as follows. Modulates RecA activity. The chain is Regulatory protein RecX from Pseudomonas savastanoi pv. phaseolicola (strain 1448A / Race 6) (Pseudomonas syringae pv. phaseolicola (strain 1448A / Race 6)).